The primary structure comprises 146 residues: Hemoglobin subunit beta-1 (146 aa).

Residues 2 to 146 (EWSSNERSTI…VISALSRQYF (145 aa)) enclose the Globin domain. Residues histidine 63 and histidine 92 each coordinate heme b.

It belongs to the globin family. As to quaternary structure, heterotetramer of two alpha chains and two beta chains. As to expression, red blood cells.

In terms of biological role, involved in oxygen transport from gills to the various peripheral tissues. The chain is Hemoglobin subunit beta-1 (hbb1) from Muraena helena (Mediterranean moray).